A 342-amino-acid chain; its full sequence is tRNA N6-adenosine threonylcarbamoyltransferase (342 aa).

Residues His-114 and His-118 each coordinate Fe cation. Substrate is bound by residues 136–140 (LVSGG), Asp-169, Gly-182, Asp-186, and Asn-275. Asp-301 serves as a coordination point for Fe cation.

The protein belongs to the KAE1 / TsaD family. Fe(2+) is required as a cofactor.

The protein localises to the cytoplasm. It carries out the reaction L-threonylcarbamoyladenylate + adenosine(37) in tRNA = N(6)-L-threonylcarbamoyladenosine(37) in tRNA + AMP + H(+). In terms of biological role, required for the formation of a threonylcarbamoyl group on adenosine at position 37 (t(6)A37) in tRNAs that read codons beginning with adenine. Is involved in the transfer of the threonylcarbamoyl moiety of threonylcarbamoyl-AMP (TC-AMP) to the N6 group of A37, together with TsaE and TsaB. TsaD likely plays a direct catalytic role in this reaction. This Streptococcus pyogenes serotype M4 (strain MGAS10750) protein is tRNA N6-adenosine threonylcarbamoyltransferase.